Here is a 153-residue protein sequence, read N- to C-terminus: 6,7-dimethyl-8-ribityllumazine synthase (153 aa).

5-amino-6-(D-ribitylamino)uracil is bound by residues Phe21, 55-57 (AFE), and 79-81 (TVI). 84–85 (AT) serves as a coordination point for (2S)-2-hydroxy-3-oxobutyl phosphate. His87 functions as the Proton donor in the catalytic mechanism. Position 112 (Phe112) interacts with 5-amino-6-(D-ribitylamino)uracil. A (2S)-2-hydroxy-3-oxobutyl phosphate-binding site is contributed by Arg126.

It belongs to the DMRL synthase family. As to quaternary structure, forms an icosahedral capsid composed of 60 subunits, arranged as a dodecamer of pentamers.

The enzyme catalyses (2S)-2-hydroxy-3-oxobutyl phosphate + 5-amino-6-(D-ribitylamino)uracil = 6,7-dimethyl-8-(1-D-ribityl)lumazine + phosphate + 2 H2O + H(+). It participates in cofactor biosynthesis; riboflavin biosynthesis; riboflavin from 2-hydroxy-3-oxobutyl phosphate and 5-amino-6-(D-ribitylamino)uracil: step 1/2. Catalyzes the formation of 6,7-dimethyl-8-ribityllumazine by condensation of 5-amino-6-(D-ribitylamino)uracil with 3,4-dihydroxy-2-butanone 4-phosphate. This is the penultimate step in the biosynthesis of riboflavin. The sequence is that of 6,7-dimethyl-8-ribityllumazine synthase from Bacillus cereus (strain AH187).